Reading from the N-terminus, the 492-residue chain is N-succinylglutamate 5-semialdehyde dehydrogenase (492 aa).

220-225 (GSASTG) is an NAD(+) binding site. Residues Glu243 and Cys277 contribute to the active site.

This sequence belongs to the aldehyde dehydrogenase family. AstD subfamily.

The enzyme catalyses N-succinyl-L-glutamate 5-semialdehyde + NAD(+) + H2O = N-succinyl-L-glutamate + NADH + 2 H(+). Its pathway is amino-acid degradation; L-arginine degradation via AST pathway; L-glutamate and succinate from L-arginine: step 4/5. Catalyzes the NAD-dependent reduction of succinylglutamate semialdehyde into succinylglutamate. In Salmonella paratyphi C (strain RKS4594), this protein is N-succinylglutamate 5-semialdehyde dehydrogenase.